Here is a 179-residue protein sequence, read N- to C-terminus: ADP-ribosylation factor-like protein 5A (179 aa).

The N-myristoyl glycine moiety is linked to residue glycine 2. GTP-binding positions include 23-30, 66-70, 125-128, and alanine 159; these read GLDNAGKT, DIGGQ, and NKQD.

This sequence belongs to the small GTPase superfamily. Arf family.

Lacks ADP-ribosylation enhancing activity. The polypeptide is ADP-ribosylation factor-like protein 5A (ARL5A) (Bos taurus (Bovine)).